Here is a 378-residue protein sequence, read N- to C-terminus: 4-hydroxy-3-methylbut-2-en-1-yl diphosphate synthase (flavodoxin) (378 aa).

Residues Cys268, Cys271, Cys303, and Glu310 each contribute to the [4Fe-4S] cluster site. A disordered region spans residues 359-378 (AEREKEKEKEKEKEKETQEQ).

Belongs to the IspG family. [4Fe-4S] cluster is required as a cofactor.

The enzyme catalyses (2E)-4-hydroxy-3-methylbut-2-enyl diphosphate + oxidized [flavodoxin] + H2O + 2 H(+) = 2-C-methyl-D-erythritol 2,4-cyclic diphosphate + reduced [flavodoxin]. It participates in isoprenoid biosynthesis; isopentenyl diphosphate biosynthesis via DXP pathway; isopentenyl diphosphate from 1-deoxy-D-xylulose 5-phosphate: step 5/6. In terms of biological role, converts 2C-methyl-D-erythritol 2,4-cyclodiphosphate (ME-2,4cPP) into 1-hydroxy-2-methyl-2-(E)-butenyl 4-diphosphate. In Bacillus cereus (strain ZK / E33L), this protein is 4-hydroxy-3-methylbut-2-en-1-yl diphosphate synthase (flavodoxin).